The sequence spans 270 residues: NAD kinase (270 aa).

Asp45 acts as the Proton acceptor in catalysis. NAD(+) is bound by residues 45–46 (DG), 121–122 (NE), Lys147, Asp149, 160–165 (TAYSKS), and Ala184.

The protein belongs to the NAD kinase family. Requires a divalent metal cation as cofactor.

It is found in the cytoplasm. It catalyses the reaction NAD(+) + ATP = ADP + NADP(+) + H(+). In terms of biological role, involved in the regulation of the intracellular balance of NAD and NADP, and is a key enzyme in the biosynthesis of NADP. Catalyzes specifically the phosphorylation on 2'-hydroxyl of the adenosine moiety of NAD to yield NADP. The sequence is that of NAD kinase from Lactobacillus johnsonii (strain CNCM I-12250 / La1 / NCC 533).